The following is a 477-amino-acid chain: UDP-N-acetylmuramate--L-alanine ligase (477 aa).

120–126 provides a ligand contact to ATP; that stretch reads GSHGKTT.

It belongs to the MurCDEF family.

The protein localises to the cytoplasm. It catalyses the reaction UDP-N-acetyl-alpha-D-muramate + L-alanine + ATP = UDP-N-acetyl-alpha-D-muramoyl-L-alanine + ADP + phosphate + H(+). Its pathway is cell wall biogenesis; peptidoglycan biosynthesis. Cell wall formation. This is UDP-N-acetylmuramate--L-alanine ligase from Rickettsia canadensis (strain McKiel).